The sequence spans 83 residues: Arminin 3a (83 aa).

An N-terminal signal peptide occupies residues 1–18 (MKTVFAILFLTFIALTCA). Residues 19-57 (RNYEDLKEKIKNEVEREIFEDLEEESDELENNFKKFNDA) constitute a propeptide that is removed on maturation. An Alanine amide modification is found at Ala-80.

The protein belongs to the arminin family. As to expression, expressed in entodermal epithelium along the body column.

The protein localises to the secreted. It is found in the target cell membrane. Antimicrobial peptide with a broad-spectrum antimicrobial activity. Keeps its antibacterial activity under a wide range of salt concentrations that mimic physiological conditions of human blood, which is surprising, since Hydra is an obligate freshwater animal with nearly no salt tolerance. Does not affect red blood cells. This chain is Arminin 3a, found in Hydra vulgaris (Hydra).